A 151-amino-acid chain; its full sequence is uncharacterized protein (151 aa).

It to M.jannaschii MJ1244 and MJ1245.

This is an uncharacterized protein from Methanothermobacter thermautotrophicus (strain ATCC 29096 / DSM 1053 / JCM 10044 / NBRC 100330 / Delta H) (Methanobacterium thermoautotrophicum).